Here is a 303-residue protein sequence, read N- to C-terminus: Polyisoprenyl-teichoic acid--peptidoglycan teichoic acid transferase TagU (303 aa).

Residues Met1–Lys4 are Cytoplasmic-facing. Residues Ile5 to Tyr25 traverse the membrane as a helical; Signal-anchor for type II membrane protein segment. At Asn26–Lys303 the chain is on the extracellular side.

This sequence belongs to the LytR/CpsA/Psr (LCP) family.

The protein resides in the cell membrane. The protein operates within cell wall biogenesis. Its function is as follows. May catalyze the final step in cell wall teichoic acid biosynthesis, the transfer of the anionic cell wall polymers (APs) from their lipid-linked precursor to the cell wall peptidoglycan (PG). This is Polyisoprenyl-teichoic acid--peptidoglycan teichoic acid transferase TagU from Bacillus anthracis (strain A0248).